The chain runs to 209 residues: uncharacterized protein (209 aa).

This is an uncharacterized protein from Magallana gigas (Pacific oyster).